The primary structure comprises 88 residues: Large ribosomal subunit protein eL37A (88 aa).

The Zn(2+) site is built by cysteine 19, cysteine 22, cysteine 34, and cysteine 37. Residues 19-37 form a C4-type zinc finger; it reads CNRCGRRSFHVQKKTCSSC.

It belongs to the eukaryotic ribosomal protein eL37 family. Component of the large ribosomal subunit (LSU). Mature yeast ribosomes consist of a small (40S) and a large (60S) subunit. The 40S small subunit contains 1 molecule of ribosomal RNA (18S rRNA) and 33 different proteins (encoded by 57 genes). The large 60S subunit contains 3 rRNA molecules (25S, 5.8S and 5S rRNA) and 46 different proteins (encoded by 81 genes). Requires Zn(2+) as cofactor.

The protein localises to the cytoplasm. Component of the ribosome, a large ribonucleoprotein complex responsible for the synthesis of proteins in the cell. The small ribosomal subunit (SSU) binds messenger RNAs (mRNAs) and translates the encoded message by selecting cognate aminoacyl-transfer RNA (tRNA) molecules. The large subunit (LSU) contains the ribosomal catalytic site termed the peptidyl transferase center (PTC), which catalyzes the formation of peptide bonds, thereby polymerizing the amino acids delivered by tRNAs into a polypeptide chain. The nascent polypeptides leave the ribosome through a tunnel in the LSU and interact with protein factors that function in enzymatic processing, targeting, and the membrane insertion of nascent chains at the exit of the ribosomal tunnel. In Saccharomyces cerevisiae (strain ATCC 204508 / S288c) (Baker's yeast), this protein is Large ribosomal subunit protein eL37A.